The sequence spans 375 residues: Superinfection exclusion protein (375 aa).

A signal peptide spans 1 to 15 (MIALLILSLACSVSA).

Belongs to the serpin family. Orthopoxvirus OPG040 subfamily. Interacts with OPG185/A56 protein.

The protein resides in the virion membrane. It is found in the host cell membrane. Negatively regulates superinfection and syncytium formation in infected host cells. Acts in concert with OPG185/A56 protein at the host cell membrane by interacting with and inhibiting the mature virion entry/fusion complex (EFC). This mechanism ensures that new virions released from the cell cannot enter already infected cells. This is Superinfection exclusion protein (OPG040) from Cynomys gunnisoni (Gunnison's prairie dog).